Reading from the N-terminus, the 336-residue chain is tRNA(Ile)-lysidine synthase (336 aa).

21-26 provides a ligand contact to ATP; the sequence is SGGLDS.

Belongs to the tRNA(Ile)-lysidine synthase family.

It localises to the cytoplasm. It carries out the reaction cytidine(34) in tRNA(Ile2) + L-lysine + ATP = lysidine(34) in tRNA(Ile2) + AMP + diphosphate + H(+). Its function is as follows. Ligates lysine onto the cytidine present at position 34 of the AUA codon-specific tRNA(Ile) that contains the anticodon CAU, in an ATP-dependent manner. Cytidine is converted to lysidine, thus changing the amino acid specificity of the tRNA from methionine to isoleucine. In Helicobacter pylori (strain ATCC 700392 / 26695) (Campylobacter pylori), this protein is tRNA(Ile)-lysidine synthase.